The following is a 749-amino-acid chain: MIRSKCSCHHHLLVLVMVVLWISPRYASAEDEHAKDFYIIYLGDRPDNTEETIKTHINLLSSLNISQEEAKERKVYSYTKAFNAFAAKLSPHEAKKMMEMEEVVSVSRNQYRKLHTTKSWDFVGLPLTAKRHLKAERDVIIGVLDTGITPDSESFLDHGLGPPPAKWKGSCGPYKNFTGCNNKIIGAKYFKHDGNVPAGEVRSPIDIDGHGTHTSSTVAGVLVANASLYGIANGTARGAVPSARLAMYKVCWARSGCADMDILAGFEAAIHDGVEIISISIGGPIADYSSDSISVGSFHAMRKGILTVASAGNDGPSSGTVTNHEPWILTVAASGIDRTFKSKIDLGNGKSFSGMGISMFSPKAKSYPLVSGVDAAKNTDDKYLARYCFSDSLDRKKVKGKVMVCRMGGGGVESTIKSYGGAGAIIVSDQYLDNAQIFMAPATSVNSSVGDIIYRYINSTRSASAVIQKTRQVTIPAPFVASFSSRGPNPGSIRLLKPDIAAPGIDILAAFTLKRSLTGLDGDTQFSKFTILSGTSMACPHVAGVAAYVKSFHPDWTPAAIKSAIITSAKPISRRVNKDAEFAYGGGQINPRRAASPGLVYDMDDISYVQFLCGEGYNATTLAPLVGTRSVSCSSIVPGLGHDSLNYPTIQLTLRSAKTSTLAVFRRRVTNVGPPSSVYTATVRAPKGVEITVEPQSLSFSKASQKRSFKVVVKAKQMTPGKIVSGLLVWKSPRHSVRSPIVIYSPTSD.

An N-terminal signal peptide occupies residues 1-28 (MIRSKCSCHHHLLVLVMVVLWISPRYAS). Positions 29–115 (AEDEHAKDFY…VSRNQYRKLH (87 aa)) are cleaved as a propeptide — activation peptide. An Inhibitor I9 domain is found at 38–115 (YIIYLGDRPD…VSRNQYRKLH (78 aa)). In terms of domain architecture, Peptidase S8 spans 119–595 (SWDFVGLPLT…GGQINPRRAA (477 aa)). D145 acts as the Charge relay system in catalysis. Residue N176 is glycosylated (N-linked (GlcNAc...) asparagine). H210 acts as the Charge relay system in catalysis. N-linked (GlcNAc...) asparagine glycosylation is found at N225, N233, N446, and N458. S536 serves as the catalytic Charge relay system. An N-linked (GlcNAc...) asparagine glycan is attached at N618.

This sequence belongs to the peptidase S8 family. Post-translationally, the C-terminal propeptide is autocleaved. In terms of tissue distribution, expressed only in roots, particularly in xylem.

The polypeptide is Subtilisin-like protease SBT4.14 (Arabidopsis thaliana (Mouse-ear cress)).